The following is a 346-amino-acid chain: Probable dual-specificity RNA methyltransferase RlmN (346 aa).

The Proton acceptor role is filled by Glu-92. The Radical SAM core domain maps to 98 to 332 (TDQRLTVCVS…VSLRASRGLD (235 aa)). Cysteines 105 and 337 form a disulfide. Residues Cys-112, Cys-116, and Cys-119 each contribute to the [4Fe-4S] cluster site. Residues 159 to 160 (GE), Ser-189, 218 to 220 (SLH), and Asn-294 contribute to the S-adenosyl-L-methionine site. Cys-337 serves as the catalytic S-methylcysteine intermediate.

This sequence belongs to the radical SAM superfamily. RlmN family. It depends on [4Fe-4S] cluster as a cofactor.

The protein localises to the cytoplasm. It carries out the reaction adenosine(2503) in 23S rRNA + 2 reduced [2Fe-2S]-[ferredoxin] + 2 S-adenosyl-L-methionine = 2-methyladenosine(2503) in 23S rRNA + 5'-deoxyadenosine + L-methionine + 2 oxidized [2Fe-2S]-[ferredoxin] + S-adenosyl-L-homocysteine. It catalyses the reaction adenosine(37) in tRNA + 2 reduced [2Fe-2S]-[ferredoxin] + 2 S-adenosyl-L-methionine = 2-methyladenosine(37) in tRNA + 5'-deoxyadenosine + L-methionine + 2 oxidized [2Fe-2S]-[ferredoxin] + S-adenosyl-L-homocysteine. Its function is as follows. Specifically methylates position 2 of adenine 2503 in 23S rRNA and position 2 of adenine 37 in tRNAs. In Synechococcus sp. (strain CC9311), this protein is Probable dual-specificity RNA methyltransferase RlmN.